The sequence spans 564 residues: Nucleolus and neural progenitor protein (564 aa).

The disordered stretch occupies residues 431–495 (GSRTSTSEHP…KRRCSGTVQR (65 aa)). Residues 442–459 (RQRRSKYKVLSRQRKPQR) are compositionally biased toward basic residues. A nuclear localization signal region spans residues 442–460 (RQRRSKYKVLSRQRKPQRK). Residues 460-473 (KLQSTLLKETQQVP) are compositionally biased toward polar residues.

Belongs to the nepro family.

It is found in the nucleus. The protein localises to the nucleolus. May play a role in cortex development as part of the Notch signaling pathway. Downstream of Notch may repress the expression of proneural genes and inhibit neuronal differentiation thereby maintaining neural progenitors. May also play a role in preimplentation embryo development. The protein is Nucleolus and neural progenitor protein of Mus musculus (Mouse).